The chain runs to 708 residues: Glutamate--tRNA ligase, cytoplasmic (708 aa).

2 interaction with ARC1 regions span residues Asn106 to Leu115 and Lys141 to Pro157. Arg205–Pro207 is a binding site for L-glutamate. A 'HIGH' region motif is present at residues Pro210–Ala219. His215 provides a ligand contact to ATP. Asp241 is an L-glutamate binding site. Thr300 is subject to Phosphothreonine. L-glutamate contacts are provided by residues Tyr382–Val386 and Arg400. ATP-binding positions include Glu403 and Leu437–Arg441. The 'KMSKS' region motif lies at Leu437–Arg441.

Belongs to the class-I aminoacyl-tRNA synthetase family. Glutamate--tRNA ligase type 2 subfamily. In terms of assembly, component of a yeast aminoacyl-tRNA synthase (aaRS) complex formed by methionyl-tRNA synthase MES1, glutamyl-tRNA synthase GUS1 and the tRNA aminoacylation cofactor ARC1 in a stoichiometric complex. Interacts (via N-ter) with ARC1 (via N-ter). Can also form a stable binary complex with ARC1 that is functional in terms of aminoacylation. ARC1 increases the affinity for cognate tRNAs due to the presence of a tRNA binding domain in the middle and C-terminal part of ARC1.

Its subcellular location is the cytoplasm. It localises to the mitochondrion. It catalyses the reaction tRNA(Glu) + L-glutamate + ATP = L-glutamyl-tRNA(Glu) + AMP + diphosphate. In terms of biological role, catalyzes the attachment of glutamate to tRNA(Glu) in a two-step reaction: glutamate is first activated by ATP to form Glu-AMP and then transferred to the acceptor end of tRNA(Glu). In mitochondria, constitutes the nondiscriminating glutamyl-tRNA synthase that generates the mitochondrial mischarged glutamyl-tRNA(Gln) substrate for the tRNA-dependent amidotransferase (AdT), which generates mitochondrial glutaminyl-tRNA(Gln) by transamidation of glutamyl-tRNA(Gln). The sequence is that of Glutamate--tRNA ligase, cytoplasmic (GUS1) from Saccharomyces cerevisiae (strain ATCC 204508 / S288c) (Baker's yeast).